The chain runs to 294 residues: MTHIPVLLKEMLLQLSPHSGGIYVDATFGAGGYSKAILESADCKVYAVDRDETVTKFYDDLNVKYPNRIKLFIEKFSNIKNLLDSNNIKGINGIVFDVGVSSMQLDNGDRGFSFLRDGPLNMSMDNYSHMNASTFVNALREEEIANTIYNYGGERHSRRIARAIVNARKKKIIKTTFELADIVRSVVFRGKSKIDPATRTFQAIRIWVNDELGELEKGIKAASEILSENGKLIVVTFHSLEDRIVKTVFKDLCEPGSTKTFSLLNKKVIKASSEEINVNPRARSAKLRAIQRLS.

S-adenosyl-L-methionine-binding positions include 31 to 33, Asp-49, Phe-76, Asp-97, and Gln-104; that span reads GGY.

It belongs to the methyltransferase superfamily. RsmH family.

Its subcellular location is the cytoplasm. It catalyses the reaction cytidine(1402) in 16S rRNA + S-adenosyl-L-methionine = N(4)-methylcytidine(1402) in 16S rRNA + S-adenosyl-L-homocysteine + H(+). Specifically methylates the N4 position of cytidine in position 1402 (C1402) of 16S rRNA. In Wolbachia pipientis subsp. Culex pipiens (strain wPip), this protein is Ribosomal RNA small subunit methyltransferase H.